The following is a 489-amino-acid chain: NADH-quinone oxidoreductase subunit N (489 aa).

The next 14 membrane-spanning stretches (helical) occupy residues A15–I35, G44–V64, F78–L98, I106–A126, L131–F151, L166–A186, L209–L229, P244–V264, W278–V298, M306–G326, A333–I353, L378–F398, G412–L432, and I459–L479.

Belongs to the complex I subunit 2 family. In terms of assembly, NDH-1 is composed of 14 different subunits. Subunits NuoA, H, J, K, L, M, N constitute the membrane sector of the complex.

The protein resides in the cell membrane. It catalyses the reaction a quinone + NADH + 5 H(+)(in) = a quinol + NAD(+) + 4 H(+)(out). In terms of biological role, NDH-1 shuttles electrons from NADH, via FMN and iron-sulfur (Fe-S) centers, to quinones in the respiratory chain. The immediate electron acceptor for the enzyme in this species is believed to be ubiquinone. Couples the redox reaction to proton translocation (for every two electrons transferred, four hydrogen ions are translocated across the cytoplasmic membrane), and thus conserves the redox energy in a proton gradient. This is NADH-quinone oxidoreductase subunit N from Chloroflexus aggregans (strain MD-66 / DSM 9485).